The following is a 160-amino-acid chain: Transcriptional regulator MraZ (160 aa).

SpoVT-AbrB domains are found at residues 5-50 and 93-136; these read KFDT…GDQV and AVEC…SQAV.

It belongs to the MraZ family. As to quaternary structure, forms oligomers.

It is found in the cytoplasm. The protein localises to the nucleoid. The protein is Transcriptional regulator MraZ of Geobacter sp. (strain M21).